The chain runs to 1556 residues: Ferredoxin-dependent glutamate synthase 2 (1556 aa).

The For GATase activity role is filled by C37. The Glutamine amidotransferase type-2 domain occupies 37–431 (CGVGFIANLR…PGQMIAVDLA (395 aa)). Residues C1173, C1179, and C1184 each contribute to the [3Fe-4S] cluster site. A disordered region spans residues 1533-1556 (PSEKDSPEANGDVSLTGEKTLTSV).

The protein belongs to the glutamate synthase family. [3Fe-4S] cluster serves as cofactor. It depends on FAD as a cofactor. Requires FMN as cofactor.

The catalysed reaction is 2 oxidized [2Fe-2S]-[ferredoxin] + 2 L-glutamate = L-glutamine + 2 reduced [2Fe-2S]-[ferredoxin] + 2-oxoglutarate + 2 H(+). It participates in amino-acid biosynthesis; L-glutamate biosynthesis via GLT pathway; L-glutamate from 2-oxoglutarate and L-glutamine (ferredoxin route): step 1/1. It functions in the pathway energy metabolism; nitrogen metabolism. This chain is Ferredoxin-dependent glutamate synthase 2 (gltS), found in Synechocystis sp. (strain ATCC 27184 / PCC 6803 / Kazusa).